The following is a 199-amino-acid chain: NAD(P)H-quinone oxidoreductase chain 6 (199 aa).

5 helical membrane-spanning segments follow: residues 9 to 29, 32 to 52, 61 to 81, 102 to 122, and 143 to 163; these read IVSF…VVLL, VVYS…LYLL, AQVL…IMLV, LVCA…PWAI, and FLLP…GAIV.

Belongs to the complex I subunit 6 family.

Its subcellular location is the membrane. The enzyme catalyses a plastoquinone + NADH + (n+1) H(+)(in) = a plastoquinol + NAD(+) + n H(+)(out). It carries out the reaction a plastoquinone + NADPH + (n+1) H(+)(in) = a plastoquinol + NADP(+) + n H(+)(out). In terms of biological role, NDH-1 shuttles electrons from NAD(P)H, via FMN and iron-sulfur (Fe-S) centers, to quinones in the respiratory chain. The immediate electron acceptor for the enzyme in this species is believed to be plastoquinone. Couples the redox reaction to proton translocation (for every two electrons transferred, four hydrogen ions are translocated across the cytoplasmic membrane), and thus conserves the redox energy in a proton gradient. This is NAD(P)H-quinone oxidoreductase chain 6 (ndhG) from Leptolyngbya boryana (Plectonema boryanum).